A 187-amino-acid chain; its full sequence is Flavin prenyltransferase UbiX (187 aa).

FMN contacts are provided by residues 9-11 (GAS), serine 34, and arginine 123. Dimethylallyl phosphate contacts are provided by tyrosine 153 and lysine 169.

The protein belongs to the UbiX/PAD1 family.

The catalysed reaction is dimethylallyl phosphate + FMNH2 = prenylated FMNH2 + phosphate. Flavin prenyltransferase that catalyzes the synthesis of the prenylated FMN cofactor (prenyl-FMN) for 4-hydroxy-3-polyprenylbenzoic acid decarboxylase UbiD. The prenyltransferase is metal-independent and links a dimethylallyl moiety from dimethylallyl monophosphate (DMAP) to the flavin N5 and C6 atoms of FMN. In Helicobacter pylori (strain J99 / ATCC 700824) (Campylobacter pylori J99), this protein is Flavin prenyltransferase UbiX.